A 93-amino-acid polypeptide reads, in one-letter code: Insertion element ISR1 uncharacterized 11 kDa protein A1 (93 aa).

2 disordered regions span residues Arg14–Arg33 and Arg68–Arg93.

The polypeptide is Insertion element ISR1 uncharacterized 11 kDa protein A1 (Rhizobium sp).